Consider the following 491-residue polypeptide: Ran-binding protein 3-like (491 aa).

Positions 270–441 (TFKSVLKFPN…VALRSLAKQG (172 aa)) constitute a RanBD1 domain. The segment at 440-468 (QGDGGPAESQSDTALPQLNGESCDEDEDE) is disordered. Positions 447–459 (ESQSDTALPQLNG) are enriched in polar residues.

Interacts with SMAD1, SMAD5 and SMAD8.

Its subcellular location is the nucleus. The protein localises to the cytoplasm. Its function is as follows. Nuclear export factor for BMP-specific SMAD1/5/8 that plays a critical role in terminating BMP signaling and regulating mesenchymal stem cell differentiation by blocking osteoblast differentiation to promote myogenic differention. Directly recognizes dephosphorylated SMAD1/5/8 and mediates their nuclear export in a Ran-dependent manner. The protein is Ran-binding protein 3-like (Ranbp3l) of Mus musculus (Mouse).